A 660-amino-acid chain; its full sequence is MNPDLRRERDSASFNPELLTHILDGSPEKTRRRREIENMILNDPDFQHEDLNFLTRSQRYEVAVRKSAIMVKKMREFGIADPDEIMWFKKLHLVNFVEPVGLNYSMFIPTLLNQGTTAQKEKWLLSSKGLQIIGTYAQTEMGHGTHLRGLETTATYDPETQEFILNSPTVTSIKWWPGGLGKTSNHAIVLAQLITKGKGYGLHAFIVPIREIGTHKPLPGITVGDIGPKFGYDEIDNGYLKMDNYRIPRENMLMKYAQVKPDGTYVKPLSNKLTYGTMVFVRSFLVGEAARALSKACTIAIRYSAVRHQSEIKPGEPEPQILDFQTQQYKLFPLLATAYAFQFVGAYMKETYHRINEGIGQGDLSELPELHALTAGLKAFTSWTANTGIEACRMACGGHGYSHCSGLPNIYVNFTPSCTFEGENTVMMLQTARFLMKSYDQVHSGKLVCGMVSYLNDLPSQRIQPQQVAVWPTMVDIHSPESLTEAYKLRAARLVEIAAKNLQKEVIHRKSKEVAWNLTSVDLVRASEAHCHYVVVKLFSEKLLKIQDKAIQAVLRNLCLLYSLYGISQNAGDFLQGSIMTEPQITQVNQRVKELLTLIRSDAVALVDAFDFQDVTLGSVLGRYDGNVYENLFEWAKNSPLNKAEVHESYKHLKSLQSKL.

At Ser26 the chain carries Phosphoserine. Residues Lys89 and Lys90 each carry the N6-succinyllysine modification. FAD is bound by residues Thr139 and Gly178. N6-acetyllysine is present on Lys216. Lys241 carries the N6-succinyllysine modification. Lys255, Lys267, and Lys272 each carry N6-acetyllysine. Lys349 carries the post-translational modification N6-succinyllysine. Residue Glu421 is the Proton acceptor of the active site. Residues Lys437 and Lys446 each carry the N6-acetyllysine; alternate modification. 2 positions are modified to N6-succinyllysine; alternate: Lys437 and Lys446. Lys500 carries the post-translational modification N6-acetyllysine. Lys512 carries the N6-acetyllysine; alternate modification. Lys512 bears the N6-succinyllysine; alternate mark. Lys542 is subject to N6-succinyllysine. Lys637 is modified (N6-acetyllysine; alternate). At Lys637 the chain carries N6-succinyllysine; alternate. N6-succinyllysine is present on Lys643. The residue at position 649 (Ser649) is a Phosphoserine. N6-acetyllysine is present on Lys651. Lys654 bears the N6-succinyllysine mark. The short motif at 658–660 is the Microbody targeting signal element; sequence SKL.

It belongs to the acyl-CoA oxidase family. Homodimer. Interacts with LONP2. The cofactor is FAD.

Its subcellular location is the peroxisome. It catalyses the reaction a 2,3-saturated acyl-CoA + O2 = a (2E)-enoyl-CoA + H2O2. The enzyme catalyses hexadecanoyl-CoA + O2 = (2E)-hexadecenoyl-CoA + H2O2. The catalysed reaction is dodecanoyl-CoA + O2 = (2E)-dodecenoyl-CoA + H2O2. It carries out the reaction octanoyl-CoA + O2 = (2E)-octenoyl-CoA + H2O2. It catalyses the reaction decanoyl-CoA + O2 = (2E)-decenoyl-CoA + H2O2. The enzyme catalyses tetradecanoyl-CoA + O2 = (2E)-tetradecenoyl-CoA + H2O2. The catalysed reaction is hexadecanedioyl-CoA + O2 = (2E)-hexadecenedioyl-CoA + H2O2. It carries out the reaction tetracosanoyl-CoA + O2 = (2E)-tetracosenoyl-CoA + H2O2. It catalyses the reaction glutaryl-CoA + O2 = (2E)-glutaconyl-CoA + H2O2. The enzyme catalyses hexanoyl-CoA + O2 = (2E)-hexenoyl-CoA + H2O2. The catalysed reaction is octadecanoyl-CoA + O2 = (2E)-octadecenoyl-CoA + H2O2. It carries out the reaction (5Z,8Z,11Z,14Z,17Z)-eicosapentaenoyl-CoA + O2 = (2E,5Z,8Z,11Z,14Z,17Z)-icosahexaenoyl-CoA + H2O2. It catalyses the reaction (6Z,9Z,12Z,15Z,18Z,21Z)-tetracosahexaenoyl-CoA + O2 = (2E,6Z,9Z,12Z,15Z,18Z,21Z)-tetracosaheptaenoyl-CoA + H2O2. Its pathway is lipid metabolism; peroxisomal fatty acid beta-oxidation. Involved in the initial and rate-limiting step of peroxisomal beta-oxidation of straight-chain saturated and unsaturated very-long-chain fatty acids. Catalyzes the desaturation of fatty acyl-CoAs such as palmitoyl-CoA (hexadecanoyl-CoA) to 2-trans-enoyl-CoAs ((2E)-enoyl-CoAs) such as (2E)-hexadecenoyl-CoA, and donates electrons directly to molecular oxygen (O(2)), thereby producing hydrogen peroxide (H(2)O(2)). Functionally, shows highest activity against medium-chain fatty acyl-CoAs. Shows optimum activity with a chain length of 10 carbons (decanoyl-CoA) in vitro. In terms of biological role, is active against a much broader range of substrates and shows activity towards long-chain acyl-CoAs. The chain is Peroxisomal acyl-coenzyme A oxidase 1 from Pongo abelii (Sumatran orangutan).